A 425-amino-acid chain; its full sequence is Serine--tRNA ligase (425 aa).

231–233 (TAE) serves as a coordination point for L-serine. 262 to 264 (RSE) lines the ATP pocket. L-serine is bound at residue Glu285. Residue 349 to 352 (EISS) coordinates ATP. Ser385 provides a ligand contact to L-serine.

The protein belongs to the class-II aminoacyl-tRNA synthetase family. Type-1 seryl-tRNA synthetase subfamily. In terms of assembly, homodimer. The tRNA molecule binds across the dimer.

The protein resides in the cytoplasm. The catalysed reaction is tRNA(Ser) + L-serine + ATP = L-seryl-tRNA(Ser) + AMP + diphosphate + H(+). The enzyme catalyses tRNA(Sec) + L-serine + ATP = L-seryl-tRNA(Sec) + AMP + diphosphate + H(+). Its pathway is aminoacyl-tRNA biosynthesis; selenocysteinyl-tRNA(Sec) biosynthesis; L-seryl-tRNA(Sec) from L-serine and tRNA(Sec): step 1/1. Its function is as follows. Catalyzes the attachment of serine to tRNA(Ser). Is also able to aminoacylate tRNA(Sec) with serine, to form the misacylated tRNA L-seryl-tRNA(Sec), which will be further converted into selenocysteinyl-tRNA(Sec). The chain is Serine--tRNA ligase from Exiguobacterium sibiricum (strain DSM 17290 / CCUG 55495 / CIP 109462 / JCM 13490 / 255-15).